Here is a 104-residue protein sequence, read N- to C-terminus: uncharacterized protein (104 aa).

The disordered stretch occupies residues 1 to 24 (MISTEKSSDAVAMHCPSGDQHNSE).

This is an uncharacterized protein from Saccharomyces cerevisiae (strain ATCC 204508 / S288c) (Baker's yeast).